A 358-amino-acid polypeptide reads, in one-letter code: Pyruvate dehydrogenase E1 component subunit alpha (358 aa).

Heterodimer of an alpha and a beta chain. Thiamine diphosphate is required as a cofactor.

It carries out the reaction N(6)-[(R)-lipoyl]-L-lysyl-[protein] + pyruvate + H(+) = N(6)-[(R)-S(8)-acetyldihydrolipoyl]-L-lysyl-[protein] + CO2. In terms of biological role, the pyruvate dehydrogenase complex catalyzes the overall conversion of pyruvate to acetyl-CoA and CO(2). It contains multiple copies of three enzymatic components: pyruvate dehydrogenase (E1), dihydrolipoamide acetyltransferase (E2) and lipoamide dehydrogenase (E3). The polypeptide is Pyruvate dehydrogenase E1 component subunit alpha (pdhA) (Mycoplasma genitalium (strain ATCC 33530 / DSM 19775 / NCTC 10195 / G37) (Mycoplasmoides genitalium)).